The primary structure comprises 342 residues: Holliday junction branch migration complex subunit RuvB (342 aa).

The disordered stretch occupies residues 1–21 (MSVEHSPVDPSAEPPEKAEEA). A large ATPase domain (RuvB-L) region spans residues 1-184 (MSVEHSPVDP…FGFTAQLDYY (184 aa)). ATP contacts are provided by residues Leu-23, Arg-24, Gly-65, Lys-68, Thr-69, Thr-70, 131–133 (EDF), Arg-174, Tyr-184, and Arg-221. Thr-69 contacts Mg(2+). The segment at 185–255 (EVADLERIVT…GAETALDLYE (71 aa)) is small ATPAse domain (RuvB-S). The segment at 258 to 342 (PLGLDRLDRA…PPDSSGEGLF (85 aa)) is head domain (RuvB-H). Positions 313 and 318 each coordinate DNA.

The protein belongs to the RuvB family. In terms of assembly, homohexamer. Forms an RuvA(8)-RuvB(12)-Holliday junction (HJ) complex. HJ DNA is sandwiched between 2 RuvA tetramers; dsDNA enters through RuvA and exits via RuvB. An RuvB hexamer assembles on each DNA strand where it exits the tetramer. Each RuvB hexamer is contacted by two RuvA subunits (via domain III) on 2 adjacent RuvB subunits; this complex drives branch migration. In the full resolvosome a probable DNA-RuvA(4)-RuvB(12)-RuvC(2) complex forms which resolves the HJ.

It is found in the cytoplasm. The catalysed reaction is ATP + H2O = ADP + phosphate + H(+). In terms of biological role, the RuvA-RuvB-RuvC complex processes Holliday junction (HJ) DNA during genetic recombination and DNA repair, while the RuvA-RuvB complex plays an important role in the rescue of blocked DNA replication forks via replication fork reversal (RFR). RuvA specifically binds to HJ cruciform DNA, conferring on it an open structure. The RuvB hexamer acts as an ATP-dependent pump, pulling dsDNA into and through the RuvAB complex. RuvB forms 2 homohexamers on either side of HJ DNA bound by 1 or 2 RuvA tetramers; 4 subunits per hexamer contact DNA at a time. Coordinated motions by a converter formed by DNA-disengaged RuvB subunits stimulates ATP hydrolysis and nucleotide exchange. Immobilization of the converter enables RuvB to convert the ATP-contained energy into a lever motion, pulling 2 nucleotides of DNA out of the RuvA tetramer per ATP hydrolyzed, thus driving DNA branch migration. The RuvB motors rotate together with the DNA substrate, which together with the progressing nucleotide cycle form the mechanistic basis for DNA recombination by continuous HJ branch migration. Branch migration allows RuvC to scan DNA until it finds its consensus sequence, where it cleaves and resolves cruciform DNA. The chain is Holliday junction branch migration complex subunit RuvB from Cutibacterium acnes (strain DSM 16379 / KPA171202) (Propionibacterium acnes).